The primary structure comprises 1255 residues: Kinesin-related protein 7 (1255 aa).

The disordered stretch occupies residues 1-26; that stretch reads MESPVVEGNSGEVATPTLPQPPTPVS. The 322-residue stretch at 28–349 folds into the Kinesin motor domain; the sequence is NIRVVCRVRP…LQFGTRAKTI (322 aa). An ATP-binding site is contributed by 107–114; it reads GQTASGKT. 3 stretches are compositionally biased toward low complexity: residues 454 to 491, 545 to 563, and 583 to 603; these read NNNNVDENNNTNNNDNNNNDNNNNNQYQEESNQYQQEN, NNNNVDDNNNGEINNDSDG, and HNINNNNNNNNNINNDNNSNS. Disordered stretches follow at residues 454-503, 530-564, 579-628, 661-686, 795-864, and 915-934; these read NNNN…NSSF, GNISDDDDDDDDHHSNNNNVDDNNNGEINNDSDGY, DLND…MDVN, ENEQQQQQQQHNDDDEDIKSTTSNAT, EEGS…TKSI, and ISIKSNKEPSPSSSTTTSIK. Polar residues predominate over residues 608–628; it reads VSTSYITSSPNLSPSKSMDVN. The span at 813 to 834 shows a compositional bias: acidic residues; sequence GDDDDEENEDNENEDVIVDSDE. Low complexity predominate over residues 915–932; the sequence is ISIKSNKEPSPSSSTTTS. The chain crosses the membrane as a helical span at residues 945–965; it reads IIFTIILTITLVSSSLLCLYL. A coiled-coil region spans residues 1088–1223; it reads NYITKIDQLS…QELEDAPIAL (136 aa).

Belongs to the TRAFAC class myosin-kinesin ATPase superfamily. Kinesin family.

It is found in the nucleus membrane. The protein resides in the cytoplasm. Its subcellular location is the cytoskeleton. Microtubule-associated force-producing protein that plays a role in organelle transport. Its motor activity is directed toward the microtubule's plus end. May be involved in cell motility or cell differentiation during prestalk formation. In Dictyostelium discoideum (Social amoeba), this protein is Kinesin-related protein 7 (kif7).